We begin with the raw amino-acid sequence, 474 residues long: Membrane-bound acylglycerophosphatidylinositol O-acyltransferase mboat7 (474 aa).

Topologically, residues 1–5 (MSPNE) are cytoplasmic. A helical membrane pass occupies residues 6–22 (LTYLAILLGSAPLGFLF). Residues 23 to 33 (KNGSPQVKQRG) lie on the Lumenal side of the membrane. Residues 34 to 57 (SAAVGVALTLITCHIHSLHSAITI) form a helical membrane-spanning segment. The Cytoplasmic portion of the chain corresponds to 58 to 73 (LGTWLIIKILPRSCHF). A helical membrane pass occupies residues 74-93 (PTLGWTFTYLLFFRTITYFD). Residues 94–193 (IPAPTPFTNA…IPSWKPLVSR (100 aa)) lie on the Lumenal side of the membrane. A helical membrane pass occupies residues 194–211 (LKPAPVFGVLFLIASQYF). Over 212–230 (PLDYVKTDEFYEQAFLYRL) the chain is Cytoplasmic. The chain crosses the membrane as a helical span at residues 231 to 260 (FYMVPTFFIFRMRFYVAWIFAECGCISAAF). The Lumenal portion of the chain corresponds to 261-427 (GAYPVSAKSR…LTFTDTYRYW (167 aa)). Asn322 is a glycosylation site (N-linked (GlcNAc...) asparagine). The chain crosses the membrane as a helical span at residues 428-448 (QSIYFSVHVLAISLFLLGRVL). Over 449–473 (ALKSPRRPRNTKEEKAEAKQENRLQ) the chain is Cytoplasmic.

This sequence belongs to the membrane-bound acyltransferase family.

The protein localises to the endoplasmic reticulum membrane. The catalysed reaction is a 1-acyl-sn-glycero-3-phospho-(1D-myo-inositol) + (5Z,8Z,11Z,14Z)-eicosatetraenoyl-CoA = a 1-acyl-2-(5Z,8Z,11Z,14Z-eicosatetraenoyl)-sn-glycero-3-phospho-(1D-myo-inositol) + CoA. It catalyses the reaction (5Z,8Z,11Z,14Z)-eicosatetraenoyl-CoA + 1-hexadecanoyl-sn-glycero-3-phosphocholine = 1-hexadecanoyl-2-(5Z,8Z,11Z,14Z-eicosatetraenoyl)-sn-glycero-3-phosphocholine + CoA. The enzyme catalyses a 1-acyl-sn-glycero-3-phospho-(1D-myo-inositol) + an acyl-CoA = a 1,2-diacyl-sn-glycero-3-phospho-(1D-myo-inositol) + CoA. It carries out the reaction 1-octadecanoyl-sn-glycero-3-phospho-(1D-myo-inositol) + (5Z,8Z,11Z,14Z)-eicosatetraenoyl-CoA = 1-octadecanoyl-2-(5Z,8Z,11Z,14Z-eicosatetraenoyl)-sn-glycero-3-phospho-(1D-myo-inositol) + CoA. Its pathway is lipid metabolism; phospholipid metabolism. Its function is as follows. Acyltransferase which catalyzes the transfer of an acyl group from an acyl-CoA to a lysophosphatidylinositol (1-acylglycerophosphatidylinositol or LPI) leading to the production of a phosphatidylinositol (1,2-diacyl-sn-glycero-3-phosphoinositol or PI) and participates in the reacylation step of the phospholipid remodeling pathway also known as the Lands cycle. Prefers arachidonoyl-CoA as the acyl donor, thus contributing to the regulation of free levels arachidonic acid in cell. This is Membrane-bound acylglycerophosphatidylinositol O-acyltransferase mboat7 (mboat7) from Xenopus laevis (African clawed frog).